The sequence spans 400 residues: Argininosuccinate synthase (400 aa).

8-16 (AYSGGLDTS) is an ATP binding site. L-citrulline contacts are provided by Tyr87 and Ser92. Gly117 is a binding site for ATP. The L-aspartate site is built by Thr119, Asn123, and Asp124. Asn123 lines the L-citrulline pocket. Arg127, Ser175, Glu259, and Tyr271 together coordinate L-citrulline.

It belongs to the argininosuccinate synthase family. Type 1 subfamily. In terms of assembly, homotetramer.

It is found in the cytoplasm. It catalyses the reaction L-citrulline + L-aspartate + ATP = 2-(N(omega)-L-arginino)succinate + AMP + diphosphate + H(+). The protein operates within amino-acid biosynthesis; L-arginine biosynthesis; L-arginine from L-ornithine and carbamoyl phosphate: step 2/3. This Parafrankia sp. (strain EAN1pec) protein is Argininosuccinate synthase.